Reading from the N-terminus, the 250-residue chain is Kv channel-interacting protein 4 (250 aa).

Positions 2–44 (NVRRVESISAQLEEASSTGGFLYTQNSTKRSIKERLMKLLPCS) are KIS. A phosphoserine mark is found at S17 and S56. The EF-hand 1; degenerate domain maps to 61–117 (LEMATVRHRPEALELLEAQSKFTKKELQILYRGFKNECPSGVVNEDTFKEIYSQFFP). EF-hand domains follow at residues 120–155 (DSTT…LLRG), 156–191 (TVQE…IYDM), and 204–239 (APRQ…DENI). The Ca(2+) site is built by D133, D135, N137, D144, D169, N171, D173, Y175, E180, D217, N219, D221, and E228. The interaction with KCND2 stretch occupies residues 237 to 250 (ENIMRSMQLFENVI).

Belongs to the recoverin family. Component of heteromultimeric potassium channels. Identified in potassium channel complexes containing KCND1, KCND2, KCND3, KCNIP1, KCNIP2, KCNIP3, KCNIP4, DPP6 and DPP10. Interacts with KCND2. Interacts with KCND3. Interacts with the C-terminus of PSEN2 and probably PSEN1.

The protein localises to the cell membrane. Its subcellular location is the cytoplasm. It localises to the peroxisome. Regulatory subunit of Kv4/D (Shal)-type voltage-gated rapidly inactivating A-type potassium channels. Modulates KCND2 channel density, inactivation kinetics and rate of recovery from inactivation in a calcium-dependent and isoform-specific manner. Modulates KCND3/Kv4.3 currents. Isoform 4 does not increase KCND2 expression at the cell membrane. Isoform 4 retains KCND3 in the endoplasmic reticulum and negatively regulates its expression at the cell membrane. The polypeptide is Kv channel-interacting protein 4 (KCNIP4) (Bos taurus (Bovine)).